Reading from the N-terminus, the 998-residue chain is Poly [ADP-ribose] polymerase 1 (998 aa).

2 consecutive PARP-type zinc fingers follow at residues 1-78 (AKSG…ETGG) and 99-189 (FAAE…PAVK). Residues cysteine 8, cysteine 11, histidine 40, cysteine 43, cysteine 111, cysteine 114, histidine 145, and cysteine 148 each contribute to the Zn(2+) site. The segment at 185 to 211 (LPAVKNEGKRKADEVDGHSAATKKKIK) is disordered. Residues 190–201 (NEGKRKADEVDG) show a composition bias toward basic and acidic residues. Short sequence motifs (nuclear localization signal) lie at residues 193-195 (KRK) and 207-212 (KKKIKK). The PADR1 zinc-binding domain occupies 211-345 (KKEKEKESKL…FKRHDRAFPP (135 aa)). A zinc ribbon region spans residues 276-318 (GALLPCEECSGQFVFKGDAYYCTGDLSAWTKCVAKTQTPNRKD). Zn(2+) contacts are provided by cysteine 281, cysteine 284, cysteine 297, and cysteine 307. Residues 348 to 361 (APTPISPPAAPEPK) are compositionally biased toward pro residues. Residues 348-370 (APTPISPPAAPEPKPTVEETFPE) are disordered. Residues 357–507 (APEPKPTVEE…GSNKSEKKMK (151 aa)) are automodification domain. In terms of domain architecture, BRCT spans 369–460 (PEGKPLTNTK…SVQELLSQFG (92 aa)). A polyADP-ribosyl glutamic acid mark is found at glutamate 391, glutamate 397, glutamate 419, glutamate 428, glutamate 429, glutamate 445, glutamate 447, glutamate 454, glutamate 467, glutamate 471, glutamate 477, glutamate 495, glutamate 496, and glutamate 503. A disordered region spans residues 471–510 (EAVQPTEKQPSSGPVAGKSSGKVKEEKGSNKSEKKMKLTV). Residues 492–506 (KVKEEKGSNKSEKKM) show a composition bias toward basic and acidic residues. A WGR domain is found at 525-621 (SCHVLETGGK…PNFTKYPKKF (97 aa)). In terms of domain architecture, PARP alpha-helical spans 645–762 (KSKLAKPVQE…DIEVAYSLLR (118 aa)). The region spanning 771 to 997 (DPIDVKYEKI…LKFNYKGGMM (227 aa)) is the PARP catalytic domain. NAD(+) is bound by residues 845–847 (HGS), glycine 854, arginine 861, and serine 887. Glutamate 971 acts as the For poly [ADP-ribose] polymerase activity in catalysis.

The protein belongs to the ARTD/PARP family. As to quaternary structure, homodimer; PARP-type zinc-fingers from separate parp1 molecules form a dimer module that specifically recognizes DNA strand breaks. In terms of processing, poly-ADP-ribosylated on serine, glutamate and aspartate residues by autocatalysis. Auto-ADP-ribosylation on serine takes place following interaction with HPF1. Auto poly-ADP-ribosylation on serine residues promotes its dissociation from chromatin.

The protein resides in the chromosome. It localises to the nucleus. Its subcellular location is the nucleolus. It is found in the cytoplasm. The protein localises to the cytosol. The catalysed reaction is NAD(+) + (ADP-D-ribosyl)n-acceptor = nicotinamide + (ADP-D-ribosyl)n+1-acceptor + H(+).. It catalyses the reaction L-seryl-[protein] + NAD(+) = O-(ADP-D-ribosyl)-L-seryl-[protein] + nicotinamide + H(+). The enzyme catalyses L-aspartyl-[protein] + NAD(+) = 4-O-(ADP-D-ribosyl)-L-aspartyl-[protein] + nicotinamide. It carries out the reaction L-glutamyl-[protein] + NAD(+) = 5-O-(ADP-D-ribosyl)-L-glutamyl-[protein] + nicotinamide. The catalysed reaction is L-tyrosyl-[protein] + NAD(+) = O-(ADP-D-ribosyl)-L-tyrosyl-[protein] + nicotinamide + H(+). It catalyses the reaction L-histidyl-[protein] + NAD(+) = N(tele)-(ADP-D-ribosyl)-L-histidyl-[protein] + nicotinamide + H(+). Its activity is regulated as follows. ADP-ribosyltransferase activity is regulated via an allosteric activation mechanism. In absence of activation signal, parp1 is autoinhibited by the PARP alpha-helical domain (also named HD region), which prevents effective NAD(+)-binding. Activity is highly stimulated by signals, such as DNA strand breaks. Binding to damaged DNA unfolds the PARP alpha-helical domain, relieving autoinhibition. Poly-ADP-ribosyltransferase activity is tightly regulated and parp1 is removed from damaged chromatin following initial poly-ADP-ribosylation of chromatin to avoid prolonged residence (trapping) that has cytotoxic consequences. A number of factors or post-translational modifications (auto-poly-ADP-ribosylation) promote parp1 removal from chromatin. Functionally, poly-ADP-ribosyltransferase that mediates poly-ADP-ribosylation of proteins and plays a key role in DNA repair. Mediates glutamate, aspartate, serine, histidine or tyrosine ADP-ribosylation of proteins: the ADP-D-ribosyl group of NAD(+) is transferred to the acceptor carboxyl group of target residues and further ADP-ribosyl groups are transferred to the 2'-position of the terminal adenosine moiety, building up a polymer with an average chain length of 20-30 units. Serine ADP-ribosylation of proteins constitutes the primary form of ADP-ribosylation of proteins in response to DNA damage. Specificity for the different amino acids is conferred by interacting factors, such as hpf1 and nmnat1. Following interaction with hpf1, catalyzes serine ADP-ribosylation of target proteins; hpf1 confers serine specificity by completing the parp1 active site. Also catalyzes tyrosine ADP-ribosylation of target proteins following interaction with hpf1. Following interaction with nmnat1, catalyzes glutamate and aspartate ADP-ribosylation of target proteins; nmnat1 confers glutamate and aspartate specificity. Parp1 initiates the repair of DNA breaks: recognizes and binds DNA breaks within chromatin and recruits hpf1, licensing serine ADP-ribosylation of target proteins, such as histones (H2BS6ADPr and H3S10ADPr), thereby promoting decompaction of chromatin and the recruitment of repair factors leading to the reparation of DNA strand breaks. In addition to base excision repair (BER) pathway, also involved in double-strand breaks (DSBs) repair. Mediates the poly-ADP-ribosylation of a number of proteins. In addition to proteins, also able to ADP-ribosylate DNA: catalyzes ADP-ribosylation of DNA strand break termini containing terminal phosphates and a 2'-OH group in single- and double-stranded DNA, respectively. Parp1-mediated DNA repair in neurons plays a role in sleep: senses DNA damage in neurons and promotes sleep, facilitating efficient DNA repair. In addition to DNA repair, also involved in other processes, such as transcription regulation, programmed cell death, membrane repair, adipogenesis and innate immunity. Acts as a repressor of transcription: binds to nucleosomes and modulates chromatin structure in a manner similar to histone H1, thereby altering RNA polymerase II. Acts both as a positive and negative regulator of transcription elongation, depending on the context. Poly-ADP-ribose chains generated by parp1 also play a role in poly-ADP-ribose-dependent cell death, a process named parthanatos. Also acts as a negative regulator of the cGAS-STING pathway by mediating poly-ADP-ribosylation and inactivation of cgas. Acts as a negative regulator of adipogenesis by catalyzing poly ADP-ribosylation of histone H2B on 'Glu-35' (H2BE35ADPr). This Xenopus laevis (African clawed frog) protein is Poly [ADP-ribose] polymerase 1 (parp1).